The primary structure comprises 1080 residues: ATP-dependent helicase/deoxyribonuclease subunit B (1080 aa).

It belongs to the helicase family. AddB/RexB type 2 subfamily. As to quaternary structure, heterodimer of AddA and RexB. Requires Mg(2+) as cofactor.

The heterodimer acts as both an ATP-dependent DNA helicase and an ATP-dependent, dual-direction single-stranded exonuclease. Recognizes the chi site generating a DNA molecule suitable for the initiation of homologous recombination. This subunit has 5' -&gt; 3' nuclease activity but not helicase activity. The protein is ATP-dependent helicase/deoxyribonuclease subunit B of Streptococcus mutans serotype c (strain ATCC 700610 / UA159).